A 249-amino-acid polypeptide reads, in one-letter code: MRILVSNDDGFHAEGIQVLAMELRKIAEVIIVAPDRNRSAASSSLTLVEPLRPRHLDNGDYCVNGTPADCVHLALNGFLSGQVDLVVSGINAGCNMGDDTIYSGTLAAALEGRHLGLPAIAVSLDGRQHYETAARVVCDLIPKLHHQLLNPREIININVPDLLFEELKGYKVCRLGYRASSAEVIKQKDPRDETIYWIGPSALPEDESEGTDFYAVKNGYVSITPIQADLTAYHSLLSLQNWLEQEFTK.

Residues Asp-8, Asp-9, Ser-39, and Asn-91 each contribute to the a divalent metal cation site.

Belongs to the SurE nucleotidase family. A divalent metal cation is required as a cofactor.

Its subcellular location is the cytoplasm. The enzyme catalyses a ribonucleoside 5'-phosphate + H2O = a ribonucleoside + phosphate. Functionally, nucleotidase that shows phosphatase activity on nucleoside 5'-monophosphates. The sequence is that of 5'-nucleotidase SurE from Haemophilus influenzae (strain 86-028NP).